The primary structure comprises 153 residues: Endoribonuclease YbeY (153 aa).

His-114, His-118, and His-124 together coordinate Zn(2+).

Belongs to the endoribonuclease YbeY family. Zn(2+) is required as a cofactor.

It is found in the cytoplasm. In terms of biological role, single strand-specific metallo-endoribonuclease involved in late-stage 70S ribosome quality control and in maturation of the 3' terminus of the 16S rRNA. The chain is Endoribonuclease YbeY from Finegoldia magna (strain ATCC 29328 / DSM 20472 / WAL 2508) (Peptostreptococcus magnus).